The chain runs to 504 residues: Protoporphyrinogen oxidase, mitochondrial (504 aa).

Residues 20–25 (GAGVSG), 43–44 (EA), Lys51, and 65–68 (GANT) contribute to the FAD site. Residues 213–232 (SPKNEKKQGPPKTSANKKRQ) are disordered. Residues Val264 and 473-475 (LSV) each bind FAD.

Belongs to the protoporphyrinogen/coproporphyrinogen oxidase family. Protoporphyrinogen oxidase subfamily. The cofactor is FAD.

The protein resides in the mitochondrion. The enzyme catalyses protoporphyrinogen IX + 3 O2 = protoporphyrin IX + 3 H2O2. The protein operates within porphyrin-containing compound metabolism; protoporphyrin-IX biosynthesis; protoporphyrin-IX from protoporphyrinogen-IX: step 1/1. Inhibited by the herbicide acifluorfen. Its function is as follows. Catalyzes the 6-electron oxidation of protoporphyrinogen-IX to form protoporphyrin-IX. In terms of biological role, provides precursor for the mitochondrial and plastidic heme synthesis and the predominant chlorophyll synthesis in plastids. This Nicotiana tabacum (Common tobacco) protein is Protoporphyrinogen oxidase, mitochondrial (PPXII).